A 23-amino-acid polypeptide reads, in one-letter code: Dermaseptin III-like peptide (23 aa).

As to expression, expressed by the skin glands.

It localises to the secreted. Functionally, possesses a potent antimicrobial activity against bacteria, fungi and protozoa. Probably acts by disturbing membrane functions with its amphipathic structure. This chain is Dermaseptin III-like peptide, found in Phyllomedusa burmeisteri (Brazilian common walking leaf frog).